The primary structure comprises 218 residues: Imidazole glycerol phosphate synthase subunit HisH (218 aa).

The region spanning 7–211 is the Glutamine amidotransferase type-1 domain; sequence STVIIDTGCA…LALDKASLDA (205 aa). C82 (nucleophile) is an active-site residue. Residues H186 and E188 contribute to the active site.

In terms of assembly, heterodimer of HisH and HisF.

The protein localises to the cytoplasm. It carries out the reaction 5-[(5-phospho-1-deoxy-D-ribulos-1-ylimino)methylamino]-1-(5-phospho-beta-D-ribosyl)imidazole-4-carboxamide + L-glutamine = D-erythro-1-(imidazol-4-yl)glycerol 3-phosphate + 5-amino-1-(5-phospho-beta-D-ribosyl)imidazole-4-carboxamide + L-glutamate + H(+). It catalyses the reaction L-glutamine + H2O = L-glutamate + NH4(+). Its pathway is amino-acid biosynthesis; L-histidine biosynthesis; L-histidine from 5-phospho-alpha-D-ribose 1-diphosphate: step 5/9. In terms of biological role, IGPS catalyzes the conversion of PRFAR and glutamine to IGP, AICAR and glutamate. The HisH subunit catalyzes the hydrolysis of glutamine to glutamate and ammonia as part of the synthesis of IGP and AICAR. The resulting ammonia molecule is channeled to the active site of HisF. This Shewanella sediminis (strain HAW-EB3) protein is Imidazole glycerol phosphate synthase subunit HisH.